A 279-amino-acid polypeptide reads, in one-letter code: Biotin synthase (279 aa).

The 227-residue stretch at 2–228 (KTIMLCAICS…ETRVMIAGGR (227 aa)) folds into the Radical SAM core domain. Positions 17, 21, and 24 each coordinate [4Fe-4S] cluster. The [2Fe-2S] cluster site is built by cysteine 61, cysteine 96, cysteine 154, and arginine 221.

It belongs to the radical SAM superfamily. Biotin synthase family. As to quaternary structure, homodimer. [4Fe-4S] cluster is required as a cofactor. The cofactor is [2Fe-2S] cluster.

It carries out the reaction (4R,5S)-dethiobiotin + (sulfur carrier)-SH + 2 reduced [2Fe-2S]-[ferredoxin] + 2 S-adenosyl-L-methionine = (sulfur carrier)-H + biotin + 2 5'-deoxyadenosine + 2 L-methionine + 2 oxidized [2Fe-2S]-[ferredoxin]. The protein operates within cofactor biosynthesis; biotin biosynthesis; biotin from 7,8-diaminononanoate: step 2/2. Its function is as follows. Catalyzes the conversion of dethiobiotin (DTB) to biotin by the insertion of a sulfur atom into dethiobiotin via a radical-based mechanism. The sequence is that of Biotin synthase from Campylobacter concisus (strain 13826).